The chain runs to 217 residues: Tegument protein BKRF4 (217 aa).

Residues 1–217 form a disordered region; that stretch reads MAMFLKSRGV…GNNNYNWPWL (217 aa). Over residues 32-42 the composition is skewed to polar residues; sequence YTLGSQASQSI. Acidic residues predominate over residues 43–79; the sequence is QEEDVSDTDESDYSDEDEEIDLEEEYPSDEDPSEGSD. The interaction with host histones H3/H4 stretch occupies residues 63-64; that stretch reads DL. The interval 81-84 is interaction with host H2A/H2B; that stretch reads DPSW. Residues 89–102 are compositionally biased toward acidic residues; sequence SDESDYSESDEDEA. The span at 106 to 132 shows a compositional bias: low complexity; that stretch reads SQASRSSRVSPSTQQSSGLTPTPSFSR. Over residues 136 to 145 the composition is skewed to pro residues; sequence RAPPRPPAPA. Residues 208–217 are compositionally biased toward polar residues; sequence GNNNYNWPWL.

It belongs to the lymphocryptovirus BKRF4 family. As to quaternary structure, forms a complex with the host H3/H4 dimer and histone chaperone ASF1. Also forms a complex with host H2A/H2B dimer. Interacts (via C-terminus) with BGLF2; this interaction is important for infectious virion production.

It is found in the virion tegument. It localises to the host nucleus. The protein localises to the host cytoplasm. The protein resides in the host perinuclear region. Its function is as follows. Histone-binding protein that binds to histones H2A/H2B, H3/H4 and cellular chromatin to overcome the host DNA damage response triggered by the viral genome ends. Interferes with histone ubiquitination and recruitment of repair proteins. The chain is Tegument protein BKRF4 from Epstein-Barr virus (strain AG876) (HHV-4).